A 323-amino-acid chain; its full sequence is Aquaporin-4 (323 aa).

The Cytoplasmic segment spans residues 1-36 (MSDGAAARRWGKCGHSCSRESIMVAFKGVWTQAFWK). S-palmitoyl cysteine attachment occurs at residues Cys13 and Cys17. The helical transmembrane segment at 37-57 (AVSAEFLATLIFVLLGVGSTI) threads the bilayer. At 58–69 (NWGGSENPLPVD) the chain is on the extracellular side. The helical transmembrane segment at 70-89 (MVLISLCFGLSIATMVQCFG) threads the bilayer. Over 90 to 93 (HISG) the chain is Cytoplasmic. Positions 94 to 101 (GHINPAVT) form an intramembrane region, discontinuously helical. The NPA 1 motif lies at 97 to 99 (NPA). Residues 102–115 (VAMVCTRKISIAKS) are Cytoplasmic-facing. Ser111 carries the phosphoserine; by PKG modification. Residues 116–136 (VFYIIAQCLGAIIGAGILYLV) traverse the membrane as a helical segment. Residues 137–155 (TPPSVVGGLGVTTVHGNLT) lie on the Extracellular side of the membrane. Residue Asn153 is glycosylated (N-linked (GlcNAc...) asparagine). Residues 156–176 (AGHGLLVELIITFQLVFTIFA) form a helical membrane-spanning segment. At 177–184 (SCDSKRTD) the chain is on the cytoplasmic side. Residue Ser180 is modified to Phosphoserine; by PKC. A helical transmembrane segment spans residues 185–205 (VTGSIALAIGFSVAIGHLFAI). Asn206 is a glycosylation site (N-linked (GlcNAc...) asparagine). Over 206-208 (NYT) the chain is Extracellular. An intramembrane region (discontinuously helical) is located at residues 209–222 (GASMNPARSFGPAV). Residues 213–215 (NPA) carry the NPA 2 motif. The Extracellular portion of the chain corresponds to 223–231 (IMGNWANHW). The helical transmembrane segment at 232 to 252 (IYWVGPIMGAVLAGALYEYVF) threads the bilayer. Over 253 to 323 (CPDVELKRRL…DSSGEVLSSV (71 aa)) the chain is Cytoplasmic. Phosphoserine is present on residues Ser276 and Ser285. Thr289 bears the Phosphothreonine mark. Residue Ser321 is modified to Phosphoserine.

This sequence belongs to the MIP/aquaporin (TC 1.A.8) family. In terms of assembly, homotetramer. The tetramers can form oligomeric arrays in membranes. The size of the oligomers differs between tissues and is smaller in skeletal muscle than in brain. Interaction between AQP4 oligomeric arrays in close-by cells can contribute to cell-cell adhesion. Part of a complex containing MLC1, TRPV4, HEPACAM and ATP1B1. In terms of processing, phosphorylation by PKC at Ser-180 reduces conductance by 50%. Phosphorylation by PKG at Ser-111 in response to glutamate increases conductance by 40%; this increase is not due to increased presence at the cell membrane. Isoform 2: Palmitoylated on its N-terminal region. Isoform 1: Not palmitoylated. In terms of tissue distribution, detected in brain cortex, especially around cortical blood vessels, and subjacent to pia, with lower levels in parenchymal membranes. Detected in ependymal and astroglial cells in brain. Detected in supporting Hensen's cells, inner sulcus cells and Claudius cells in the inner ear. Detected in skeletal muscle. Detected in gastric parietal cells. Detected in principal cells in collecting ducts in kidney medulla (at protein level). Detected in brain, heart and skeletal muscle.

It localises to the cell membrane. Its subcellular location is the basolateral cell membrane. The protein localises to the endosome membrane. The protein resides in the sarcolemma. It is found in the cell projection. The enzyme catalyses H2O(in) = H2O(out). Its function is as follows. Forms a water-specific channel. Plays an important role in brain water homeostasis and in glymphatic solute transport. Required for a normal rate of water exchange across the blood brain interface. Required for normal levels of cerebrospinal fluid influx into the brain cortex and parenchyma along paravascular spaces that surround penetrating arteries, and for normal drainage of interstitial fluid along paravenous drainage pathways. Thereby, it is required for normal clearance of solutes from the brain interstitial fluid, including soluble beta-amyloid peptides derived from APP. Plays a redundant role in urinary water homeostasis and urinary concentrating ability. In Mus musculus (Mouse), this protein is Aquaporin-4 (Aqp4).